The chain runs to 90 residues: Large ribosomal subunit protein bL27 (90 aa).

Residues Met1–Arg20 form a disordered region.

The protein belongs to the bacterial ribosomal protein bL27 family.

The sequence is that of Large ribosomal subunit protein bL27 from Rhodopseudomonas palustris (strain BisB18).